The chain runs to 527 residues: Cytochrome P450 monooxyhenase eriA (527 aa).

A helical transmembrane segment spans residues 17-37 (LGVVDLSLLGVGAVIAFAWLF). Asparagine 77, asparagine 274, and asparagine 297 each carry an N-linked (GlcNAc...) asparagine glycan. Position 453 (cysteine 453) interacts with heme.

This sequence belongs to the cytochrome P450 family. Requires heme as cofactor.

The protein resides in the membrane. The catalysed reaction is cyathadiol + reduced [NADPH--hemoprotein reductase] + O2 = cyathatriol + oxidized [NADPH--hemoprotein reductase] + H2O + H(+). It participates in secondary metabolite biosynthesis. In terms of biological role, cytochrome P450 monooxygenase; part of the gene cluster that mediates the biosynthesis of erinacines, cyathane-xylosides that show unique biological activities, including leishmanicidal activity, stimulating activity for nerve growth-factor synthesis, and agonistic activity toward the kappa opioid receptor. Within the pathway, eriA catalyzes C-11 hydroxylation in the presence of the short chain dehydrogenase/reductase (SDR) eriH, which leads to the production of cyathatriol. The first step of the erinacines biosynthesis pathway is catalyzed by the geranylgeranyl diphosphate (GGPP) synthase eriE via conversion of farnesyl pyrophosphate and isopentyl pyrophosphate into geranylgeranyl pyrophosphate (GGPP). GGPP is then substrate of the diterpene cyclase eriG for the production of cyatha-3,12-diene. The cytochrome P450 monooxygenase eriI then hydroxylates cyatha-3,12-diene at C-14 of the seven-membered ring to produce erinacol, which is further hydroxylated at C-15 by the cytochrome P450 monooxygenase eriC to yield cyathadiol. The cytochrome P450 monooxygenase eriA then catalyzes C-11 hydroxylation in the presence of the short chain dehydrogenase/reductase (SDR) eriH, which leads to the production of cyathatriol. The acetyltransferase eriL converts cyathatriol into 11-O-acetyl-cyathatriol. The SDR eriH catalyzes further oxidation of 11-O-acetyl-cyathatriol into 1-O-acetylcyathin A3. Finally, the glycosyl transferase eriJ tranfers xylose from UDP-xylose onto C-14 of 11-O-acetyl-cyathatriol to form eracine Q. EriJ is also able to convert 11-O-acetyl-cyathatriol to eracine Q2 by using UDP-D-glucose as cosubstrate, but at a lower rate. The chain is Cytochrome P450 monooxyhenase eriA from Hericium erinaceus (Lion's mane mushroom).